A 140-amino-acid polypeptide reads, in one-letter code: MNIIQTLEAEQAAKLAEKRAIPDFQPGDTIIVNVKVVEGERSRVQAYEGVCIARSGGGLNESFTVRKISYGEGVERVFPVYAPLIDSIKVVRRGKVRRAKLYYLRDRRGKSARIAERQDRTADGKIKKGGKSAPAPTAAE.

Residues 113–126 (RIAERQDRTADGKI) are compositionally biased toward basic and acidic residues. The segment at 113–140 (RIAERQDRTADGKIKKGGKSAPAPTAAE) is disordered.

It belongs to the bacterial ribosomal protein bL19 family.

Its function is as follows. This protein is located at the 30S-50S ribosomal subunit interface and may play a role in the structure and function of the aminoacyl-tRNA binding site. In Xanthobacter autotrophicus (strain ATCC BAA-1158 / Py2), this protein is Large ribosomal subunit protein bL19.